Here is a 396-residue protein sequence, read N- to C-terminus: Elongation factor Tu 1 (396 aa).

Residues 10–206 (KPHVNVGTIG…TLDTYIPEPE (197 aa)) enclose the tr-type G domain. The G1 stretch occupies residues 19 to 26 (GHVDHGKT). 19–26 (GHVDHGKT) contacts GTP. Residue threonine 26 participates in Mg(2+) binding. The interval 60–64 (GITIN) is G2. The interval 81-84 (DCPG) is G3. GTP is bound by residues 81-85 (DCPGH) and 136-139 (NKCD). The interval 136–139 (NKCD) is G4. Residues 174 to 176 (SAL) form a G5 region.

This sequence belongs to the TRAFAC class translation factor GTPase superfamily. Classic translation factor GTPase family. EF-Tu/EF-1A subfamily. Monomer.

Its subcellular location is the cytoplasm. The enzyme catalyses GTP + H2O = GDP + phosphate + H(+). Functionally, GTP hydrolase that promotes the GTP-dependent binding of aminoacyl-tRNA to the A-site of ribosomes during protein biosynthesis. The chain is Elongation factor Tu 1 from Psychrobacter sp. (strain PRwf-1).